Here is a 704-residue protein sequence, read N- to C-terminus: Serotransferrin (704 aa).

The signal sequence occupies residues methionine 1–alanine 19. Transferrin-like domains lie at valine 25 to glutamate 351 and valine 364 to glutamine 689. 2 disulfide bridges follow: cysteine 28–cysteine 66 and cysteine 38–cysteine 57. A Dimethylated arginine modification is found at arginine 42. Residues aspartate 81 and tyrosine 113 each coordinate Fe(3+). Intrachain disulfides connect cysteine 136–cysteine 217, cysteine 176–cysteine 192, cysteine 179–cysteine 200, cysteine 189–cysteine 202, and cysteine 250–cysteine 264. The hydrogencarbonate site is built by threonine 138, arginine 142, alanine 144, and glycine 145. Fe(3+) is bound at residue tyrosine 211. Residue histidine 272 participates in Fe(3+) binding. 11 disulfides stabilise this stretch: cysteine 362/cysteine 622, cysteine 367/cysteine 399, cysteine 377/cysteine 390, cysteine 424/cysteine 699, cysteine 441/cysteine 663, cysteine 473/cysteine 549, cysteine 497/cysteine 690, cysteine 507/cysteine 521, cysteine 518/cysteine 532, cysteine 589/cysteine 603, and cysteine 641/cysteine 646. Fe(3+) contacts are provided by aspartate 414 and tyrosine 449. Residues threonine 475, arginine 479, alanine 481, and glycine 482 each contribute to the hydrogencarbonate site. Asparagine 514 carries N-linked (GlcNAc...) asparagine glycosylation. Fe(3+) is bound at residue tyrosine 543. Histidine 611 contributes to the Fe(3+) binding site. A Phosphoserine modification is found at serine 691.

Belongs to the transferrin family. Monomer. Part of a complex composed of SLC40A1/ferroportin, TF/transferrin and HEPH/hephaestin that transfers iron from cells to transferrin. Expressed by the liver and secreted in plasma.

Its subcellular location is the secreted. Functionally, transferrins are iron binding transport proteins which can bind two Fe(3+) ions in association with the binding of an anion, usually bicarbonate. It is responsible for the transport of iron from sites of absorption and heme degradation to those of storage and utilization. Serum transferrin may also have a further role in stimulating cell proliferation. In Bos taurus (Bovine), this protein is Serotransferrin (TF).